The primary structure comprises 110 residues: Eukaryotic translation initiation factor eIF1 (110 aa).

Belongs to the SUI1 family.

Functionally, probably involved in translation. The protein is Eukaryotic translation initiation factor eIF1 of Anopheles gambiae (African malaria mosquito).